The following is a 60-amino-acid chain: Probable UDP-arabinopyranose mutase 1 (60 aa).

It belongs to the RGP family. As to quaternary structure, homopentamer or homohexamer. The cofactor is Mn(2+). It depends on Mg(2+) as a cofactor.

It localises to the secreted. It is found in the cell wall. The protein resides in the cell junction. Its subcellular location is the plasmodesma. The protein localises to the golgi apparatus. The catalysed reaction is UDP-beta-L-arabinofuranose = UDP-beta-L-arabinopyranose. Its function is as follows. Probable UDP-L-arabinose mutase involved in the biosynthesis of cell wall non-cellulosic polysaccharides. The sequence is that of Probable UDP-arabinopyranose mutase 1 from Phoenix dactylifera (Date palm).